The following is an 80-amino-acid chain: MDGGQPVPSPLVPLGNGSDYSMSLEQKTTFVFVILLFIFLGILIVRCFRILLDPYRSMPTSTWADGLEGLEKGQFDHALA.

Residues 28-48 traverse the membrane as a helical segment; that stretch reads TTFVFVILLFIFLGILIVRCF.

The protein belongs to the cortexin family.

It is found in the membrane. The polypeptide is Cortexin-3 (Ctxn3) (Mus musculus (Mouse)).